We begin with the raw amino-acid sequence, 352 residues long: 3-isopropylmalate dehydrogenase (352 aa).

Gly-76 to Glu-89 serves as a coordination point for NAD(+). Substrate is bound by residues Arg-96, Arg-106, Arg-134, and Asp-220. The Mg(2+) site is built by Asp-220, Asp-244, and Asp-248. Gly-277–Asn-289 contributes to the NAD(+) binding site.

This sequence belongs to the isocitrate and isopropylmalate dehydrogenases family. LeuB type 1 subfamily. In terms of assembly, homodimer. The cofactor is Mg(2+). Mn(2+) is required as a cofactor.

The protein resides in the cytoplasm. It carries out the reaction (2R,3S)-3-isopropylmalate + NAD(+) = 4-methyl-2-oxopentanoate + CO2 + NADH. It functions in the pathway amino-acid biosynthesis; L-leucine biosynthesis; L-leucine from 3-methyl-2-oxobutanoate: step 3/4. Catalyzes the oxidation of 3-carboxy-2-hydroxy-4-methylpentanoate (3-isopropylmalate) to 3-carboxy-4-methyl-2-oxopentanoate. The product decarboxylates to 4-methyl-2 oxopentanoate. In Chlorobaculum tepidum (strain ATCC 49652 / DSM 12025 / NBRC 103806 / TLS) (Chlorobium tepidum), this protein is 3-isopropylmalate dehydrogenase.